Consider the following 422-residue polypeptide: Probable isoprenylcysteine alpha-carbonyl methylesterase ICMEL2 (422 aa).

Basic and acidic residues predominate over residues 1–16; it reads MQLSPERCRPMSENRE. Residues 1-55 form a disordered region; that stretch reads MQLSPERCRPMSENREAWSANSEEMELLHGSNRLSSPEHVRRRVSGNSSEDGSPR. 2 helical membrane passes run 97–117 and 152–172; these read LLAL…VAYL and VVVF…GSLL. Substrate-binding positions include 158–160 and 229–231; these read GGA and QSA. Active-site residues include S230, D331, and H363.

It belongs to the AB hydrolase superfamily. Isoprenylcysteine methylesterase family. In terms of tissue distribution, expressed at low levels in flowers and siliques.

The protein localises to the endoplasmic reticulum membrane. It is found in the golgi apparatus membrane. It carries out the reaction [protein]-C-terminal S-[(2E,6E)-farnesyl]-L-cysteine methyl ester + H2O = [protein]-C-terminal S-[(2E,6E)-farnesyl]-L-cysteine + methanol + H(+). Catalyzes the demethylation of isoprenylcysteine methylesters. May act as a negative regulator of ABA signaling. The chain is Probable isoprenylcysteine alpha-carbonyl methylesterase ICMEL2 from Arabidopsis thaliana (Mouse-ear cress).